The primary structure comprises 196 residues: MAIDVKAIEEHIRGILIALGDDPEREGLKNTPKRVAKMYEEVFKGMCYSNDEIAEMFNVTFEDDLCINDNENDMVFMKEIEIFSHCEHHLALMYNMKVAIAYIPKKKIIGLSKIARIADMVGRRLQLQERIGSDIAEILQKITGSEDVAVIIEGEHGCMTTRGIKKPGTKTITTTLRGRFNTDPIVSNKLMMLYTK.

Zn(2+) contacts are provided by cysteine 86, histidine 89, and cysteine 158.

Belongs to the GTP cyclohydrolase I family. In terms of assembly, homomer.

The enzyme catalyses GTP + H2O = 7,8-dihydroneopterin 3'-triphosphate + formate + H(+). The protein operates within cofactor biosynthesis; 7,8-dihydroneopterin triphosphate biosynthesis; 7,8-dihydroneopterin triphosphate from GTP: step 1/1. The protein is GTP cyclohydrolase 1 of Clostridium botulinum (strain Kyoto / Type A2).